The following is a 101-amino-acid chain: uncharacterized protein (101 aa).

May regulate the expression of phage structural components with protein P13. This is an uncharacterized protein from Pseudoalteromonas phage PM2 (Bacteriophage PM2).